The chain runs to 192 residues: Ion-translocating oxidoreductase complex subunit A (192 aa).

The next 6 membrane-spanning stretches (helical) occupy residues 5 to 25 (LLLL…FLGL), 39 to 59 (IGMS…SFLV), 72 to 92 (LRTM…EMLV), 102 to 122 (ALGI…VALL), 134 to 154 (AIYG…FSAM), and 171 to 191 (AIAM…TGLV).

This sequence belongs to the NqrDE/RnfAE family. In terms of assembly, the complex is composed of six subunits: RnfA, RnfB, RnfC, RnfD, RnfE and RnfG.

The protein localises to the cell inner membrane. In terms of biological role, part of a membrane-bound complex that couples electron transfer with translocation of ions across the membrane. In Shewanella amazonensis (strain ATCC BAA-1098 / SB2B), this protein is Ion-translocating oxidoreductase complex subunit A.